The chain runs to 212 residues: Probable GTP-binding protein EngB (212 aa).

The EngB-type G domain maps to 40–212 (SLPEIAFVGK…KASLAKCIKA (173 aa)). GTP-binding positions include 48 to 55 (GKSNVGKS), 75 to 79 (GRTRQ), 93 to 96 (DLPG), 160 to 163 (TKSD), and 191 to 193 (VSS). Positions 55 and 77 each coordinate Mg(2+).

Belongs to the TRAFAC class TrmE-Era-EngA-EngB-Septin-like GTPase superfamily. EngB GTPase family. The cofactor is Mg(2+).

Necessary for normal cell division and for the maintenance of normal septation. The chain is Probable GTP-binding protein EngB from Rickettsia akari (strain Hartford).